Reading from the N-terminus, the 248-residue chain is MMVNSLKKRIQRSFNKAFDTYDDHASIQREICKQLLKPLKEMRIQTKIIADFACGTGISTKAVADSFPYQNLYAIDFCEKLLIQAKSKLKESNVEFILADFETNVFLCNSLDLIFCNMGFQWALDLKQTFFSLFSQLKAFGVLAFSVPLLGTFCELRNDCRNPFLTLQSIVQLLKAVGFELLTADEKIFTDSFESPLDAIRSIKSIGANCLLYPKRNKGLSPMPIEKNNTDTTLTYHIGFFIAKKIIQ.

This sequence belongs to the methyltransferase superfamily.

It catalyses the reaction malonyl-[ACP] + S-adenosyl-L-methionine = malonyl-[ACP] methyl ester + S-adenosyl-L-homocysteine. Its pathway is cofactor biosynthesis; biotin biosynthesis. Converts the free carboxyl group of a malonyl-thioester to its methyl ester by transfer of a methyl group from S-adenosyl-L-methionine (SAM). It allows to synthesize pimeloyl-ACP via the fatty acid synthetic pathway. This is Malonyl-[acyl-carrier protein] O-methyltransferase 2 from Coxiella burnetii (strain RSA 493 / Nine Mile phase I).